Reading from the N-terminus, the 807-residue chain is Putative AC transposase (807 aa).

2 disordered regions span residues 42 to 140 (GLKR…KKCT) and 785 to 807 (MDED…GSSP). Positions 84-98 (QSVSSSNANGTATDP) are enriched in polar residues. Tandem repeats lie at residues 109–110 (PQ), 111–112 (PQ), 113–114 (PQ), 115–116 (PQ), 117–118 (PE), 119–120 (PQ), 121–122 (PQ), 123–124 (PQ), 125–126 (PE), and 127–128 (PE). Residues 109–128 (PQPQPQPQPEPQPQPQPEPE) are 10 X 2 AA tandem repeats of P-[QE]. Residues 110–125 (QPQPQPQPEPQPQPQP) are compositionally biased toward pro residues.

This is Putative AC transposase from Zea mays (Maize).